The sequence spans 142 residues: Small ribosomal subunit protein uS19 (142 aa).

Belongs to the universal ribosomal protein uS19 family. In terms of assembly, component of the small ribosomal subunit. Mature ribosomes consist of a small (40S) and a large (60S) subunit. The 40S subunit contains about 32 different proteins and 1 molecule of RNA (18S). The 60S subunit contains 45 different proteins and 3 molecules of RNA (25S, 5.8S and 5S).

It is found in the cytoplasm. Component of the ribosome, a large ribonucleoprotein complex responsible for the synthesis of proteins in the cell. The small ribosomal subunit (SSU) binds messenger RNAs (mRNAs) and translates the encoded message by selecting cognate aminoacyl-transfer RNA (tRNA) molecules. The large subunit (LSU) contains the ribosomal catalytic site termed the peptidyl transferase center (PTC), which catalyzes the formation of peptide bonds, thereby polymerizing the amino acids delivered by tRNAs into a polypeptide chain. The nascent polypeptides leave the ribosome through a tunnel in the LSU and interact with protein factors that function in enzymatic processing, targeting, and the membrane insertion of nascent chains at the exit of the ribosomal tunnel. RPS15 has a role in the late stage of the assembly of pre-40S particles within the nucleus and controls their export to the cytoplasm. The chain is Small ribosomal subunit protein uS19 (RPS15) from Candida albicans (strain SC5314 / ATCC MYA-2876) (Yeast).